The following is a 524-amino-acid chain: MEPKAPQLRRRERQGEEQENGACGEGNTRTHRAPDLVQWTRHMEAVKTQCLEQAQRELAELMDRAIWEAVQAYPKQDRPLPSTASDSTRKTQELHPGKRKVFITRKSLLDELMGVQHFRTIYHMFIAGLCVLIISTLAIDFIDEGRLMLEFDLLLFSFGQLPLALMMWVPMFLSTLLLPYQTLRLWARPRSGGAWTLGASLGCVLLAAHAAVLCVLPVHVSVKHELPPASRCVLVFEQVRFLMKSYSFLRETVPGIFCVRGGKGICTPSFSSYLYFLFCPTLIYRETYPRTPSIRWNYVAKNFAQALGCLLYACFILGRLCVPVFANMSREPFSTRALLLSILHATGPGIFMLLLIFFAFLHCWLNAFAEMLRFGDRMFYRDWWNSTSFSNYYRTWNVVVHDWLYSYVYQDGLWLLGRQGRGAAMLGVFLVSALVHEYIFCFVLGFFYPVMLILFLVVGGLLNFTMNDRHTGPAWNILMWTFLFLGQGIQVSLYCQEWYARRHCPLPQPTFWELVTPRSWSCHP.

The segment at 1–31 (MEPKAPQLRRRERQGEEQENGACGEGNTRTH) is disordered. Over 1-118 (MEPKAPQLRR…LDELMGVQHF (118 aa)) the chain is Cytoplasmic. His117 provides a ligand contact to cholesterol. Residues 119–140 (RTIYHMFIAGLCVLIISTLAID) traverse the membrane as a helical segment. Residues 141–160 (FIDEGRLMLEFDLLLFSFGQ) are Lumenal-facing. Residues 161–186 (LPLALMMWVPMFLSTLLLPYQTLRLW) form a helical membrane-spanning segment. The Cytoplasmic portion of the chain corresponds to 187–198 (ARPRSGGAWTLG). A helical membrane pass occupies residues 199-222 (ASLGCVLLAAHAAVLCVLPVHVSV). The Lumenal portion of the chain corresponds to 223–230 (KHELPPAS). A helical membrane pass occupies residues 231-254 (RCVLVFEQVRFLMKSYSFLRETVP). Topologically, residues 255 to 295 (GIFCVRGGKGICTPSFSSYLYFLFCPTLIYRETYPRTPSIR) are cytoplasmic. The residue at position 279 (Cys279) is a Cysteine sulfenic acid (-SOH); alternate. Cys279 is covalently cross-linked (Glycyl cysteine thioester (Cys-Gly) (interchain with G-Cter in ubiquitin); alternate). Residues 296 to 328 (WNYVAKNFAQALGCLLYACFILGRLCVPVFANM) traverse the membrane as a helical segment. Residues 329-345 (SREPFSTRALLLSILHA) are Lumenal-facing. A helical membrane pass occupies residues 346 to 371 (TGPGIFMLLLIFFAFLHCWLNAFAEM). The Cytoplasmic portion of the chain corresponds to 372–419 (LRFGDRMFYRDWWNSTSFSNYYRTWNVVVHDWLYSYVYQDGLWLLGRQ). The short motif at 379–385 (FYRDWWN) is the FYXDWWN motif element. Residues Asn391, Arg394, Asn397, His401, Tyr409, and Ser432 each contribute to the an acyl-CoA site. The helical transmembrane segment at 420-444 (GRGAAMLGVFLVSALVHEYIFCFVL) threads the bilayer. Residue His436 is part of the active site. Topologically, residues 445–450 (GFFYPV) are lumenal. The helical transmembrane segment at 451 to 466 (MLILFLVVGGLLNFTM) threads the bilayer. Residues 467–472 (NDRHTG) are Cytoplasmic-facing. The chain crosses the membrane as a helical span at residues 473 to 504 (PAWNILMWTFLFLGQGIQVSLYCQEWYARRHC). Residues 505–524 (PLPQPTFWELVTPRSWSCHP) are Lumenal-facing.

The protein belongs to the membrane-bound acyltransferase family. Sterol o-acyltransferase subfamily. In terms of assembly, may form homo- or heterodimers. Interacts with INSIG1; the interaction is direct and promotes association with AMFR/gp78. In terms of processing, polyubiquitinated by AMFR/gp78 at Cys-279, leading to its degradation when the lipid levels are low. Association with AMFR/gp78 is mediated via interaction with INSIG1. High concentration of cholesterol and fatty acid results in Cys-279 oxidation, preventing ubiquitination at the same site, resulting in protein stabilization. Post-translationally, oxidized at Cys-279: high concentration of cholesterol and fatty acid induce reactive oxygen species, which oxidizes Cys-279, preventing ubiquitination at the same site, and resulting in protein stabilization.

It localises to the endoplasmic reticulum membrane. It catalyses the reaction a sterol + a long-chain fatty acyl-CoA = a long-chain 3-hydroxysterol ester + CoA. It carries out the reaction cholesterol + an acyl-CoA = a cholesterol ester + CoA. The catalysed reaction is cholesterol + (9Z)-octadecenoyl-CoA = cholesteryl (9Z-octadecenoate) + CoA. The enzyme catalyses (5Z,8Z,11Z,14Z,17Z)-eicosapentaenoyl-CoA + cholesterol = (5Z,8Z,11Z,14Z,17Z-eicosapentaenoyl)-cholesterol + CoA. It catalyses the reaction (9Z,12Z,15Z)-octadecatrienoyl-CoA + cholesterol = (9Z,12Z,15Z-octadecatrienoyl)-cholesterol + CoA. It carries out the reaction (5Z,8Z,11Z,14Z)-eicosatetraenoyl-CoA + cholesterol = cholesteryl (5Z,8Z,11Z,14Z)-eicosatetraenoate + CoA. In terms of biological role, catalyzes the formation of fatty acid-cholesterol esters, which are less soluble in membranes than cholesterol. Plays a role in lipoprotein assembly and dietary cholesterol absorption. Utilizes oleoyl-CoA ((9Z)-octadecenoyl-CoA) and linolenoyl-CoA ((9Z,12Z,15Z)-octadecatrienoyl-CoA) as substrates. May provide cholesteryl esters for lipoprotein secretion from hepatocytes and intestinal mucosa. The polypeptide is Sterol O-acyltransferase 2 (Rattus norvegicus (Rat)).